Reading from the N-terminus, the 714-residue chain is Epithelial splicing regulatory protein 1 (714 aa).

3 RRM domains span residues 225–302 (TVIR…KATG), 326–406 (IIVR…KSTA), and 450–530 (DCVR…ACSA).

This sequence belongs to the ESRP family.

Its subcellular location is the nucleus. Functionally, mRNA splicing factor that regulates the formation of epithelial cell-specific isoforms. Specifically regulates the expression of FGFR2-IIIb, an epithelial cell-specific isoform of fgfr2. Acts by directly binding specific sequences in mRNAs. Binds the GU-rich sequence motifs in the ISE/ISS-3, a cis-element regulatory region present in the mRNA of fgfr2. In Danio rerio (Zebrafish), this protein is Epithelial splicing regulatory protein 1 (esrp1).